Here is a 501-residue protein sequence, read N- to C-terminus: UDP-N-acetylmuramoyl-L-alanyl-D-glutamate--2,6-diaminopimelate ligase (501 aa).

Ser29 is a binding site for UDP-N-acetyl-alpha-D-muramoyl-L-alanyl-D-glutamate. 112 to 118 (GTNGKTS) provides a ligand contact to ATP. Residues 161–162 (TT), Ser188, and Arg196 contribute to the UDP-N-acetyl-alpha-D-muramoyl-L-alanyl-D-glutamate site. Lys228 is subject to N6-carboxylysine. Meso-2,6-diaminopimelate is bound by residues Arg393, 417 to 420 (DNPR), Gly468, and Glu472. The Meso-diaminopimelate recognition motif motif lies at 417 to 420 (DNPR).

Belongs to the MurCDEF family. MurE subfamily. Mg(2+) serves as cofactor. In terms of processing, carboxylation is probably crucial for Mg(2+) binding and, consequently, for the gamma-phosphate positioning of ATP.

The protein localises to the cytoplasm. It carries out the reaction UDP-N-acetyl-alpha-D-muramoyl-L-alanyl-D-glutamate + meso-2,6-diaminopimelate + ATP = UDP-N-acetyl-alpha-D-muramoyl-L-alanyl-gamma-D-glutamyl-meso-2,6-diaminopimelate + ADP + phosphate + H(+). Its pathway is cell wall biogenesis; peptidoglycan biosynthesis. Functionally, catalyzes the addition of meso-diaminopimelic acid to the nucleotide precursor UDP-N-acetylmuramoyl-L-alanyl-D-glutamate (UMAG) in the biosynthesis of bacterial cell-wall peptidoglycan. This is UDP-N-acetylmuramoyl-L-alanyl-D-glutamate--2,6-diaminopimelate ligase from Acidovorax sp. (strain JS42).